The following is a 286-amino-acid chain: Merozoite surface protein 2 (286 aa).

An N-terminal signal peptide occupies residues 1–20 (MKVIKTLSIINFFIFVTFNI). Residues Asn-22 and Asn-36 are each glycosylated (N-linked (GlcNAc...) asparagine). The segment at 43-248 (MTESKTPTPT…SQKECTDGNK (206 aa)) is disordered. The segment at 44–212 (TESKTPTPTG…EQTESPELQS (169 aa)) is polymorphic region. Over residues 54-68 (AGAGASGSAGSGDGA) the composition is skewed to gly residues. Copy 1 of the repeat occupies 59–68 (SGSAGSGDGA). Positions 59 to 106 (SGSAGSGDGASGSASGSASGSASGSAGASGSASGSAGASGSASGSAGA) are 5 X 10 AA tandem repeats of S-G-S-A-[GS]-[GS]-[AD]-G-A. One copy of the 2; partial repeat lies at 69-76 (SGSASGSA). A compositionally biased stretch (low complexity) spans 69–137 (SGSASGSASG…STSTSSENPN (69 aa)). Tandem repeats lie at residues 77–86 (SGSASGSAGA), 88–96 (GSASGSAGA), and 97–106 (SGSASGSAGA). Composition is skewed to polar residues over residues 153-179 (KPNQ…NVPP) and 186-214 (KSPT…QSAP). Asn-163 is a glycosylation site (N-linked (GlcNAc...) asparagine). N-linked (GlcNAc...) asparagine glycosylation occurs at Asn-235. Residues 239-248 (SQKECTDGNK) are compositionally biased toward basic and acidic residues. Cys-243 and Cys-251 are joined by a disulfide. 2 N-linked (GlcNAc...) asparagine glycosylation sites follow: Asn-259 and Asn-260. A lipid anchor (GPI-anchor amidated asparagine) is attached at Asn-260. A propeptide spans 261–286 (SSNIASINKFVVLISATLVLSFAIFI) (removed in mature form).

It is found in the cell membrane. In terms of biological role, may play a role in the merozoite attachment to the erythrocyte. This Plasmodium falciparum (isolate 311) protein is Merozoite surface protein 2.